A 184-amino-acid polypeptide reads, in one-letter code: Large ribosomal subunit protein uL5 (184 aa).

Belongs to the universal ribosomal protein uL5 family. In terms of assembly, component of the large ribosomal subunit. Interacts with Fmr1 to form the RNA-induced silencing complex (RISC), a ribonucleoprotein (RNP) complex involved in translation regulation, other components of the complex are RpL5, Rm62, AGO2 and Dcr-1.

It is found in the nucleus. Its subcellular location is the cytoplasm. In terms of biological role, component of the ribosome, a large ribonucleoprotein complex responsible for the synthesis of proteins in the cell. The small ribosomal subunit (SSU) binds messenger RNAs (mRNAs) and translates the encoded message by selecting cognate aminoacyl-transfer RNA (tRNA) molecules. The large subunit (LSU) contains the ribosomal catalytic site termed the peptidyl transferase center (PTC), which catalyzes the formation of peptide bonds, thereby polymerizing the amino acids delivered by tRNAs into a polypeptide chain. The nascent polypeptides leave the ribosome through a tunnel in the LSU and interact with protein factors that function in enzymatic processing, targeting, and the membrane insertion of nascent chains at the exit of the ribosomal tunnel. This is Large ribosomal subunit protein uL5 (RpL11) from Drosophila melanogaster (Fruit fly).